Reading from the N-terminus, the 101-residue chain is Large ribosomal subunit protein uL23 (101 aa).

This sequence belongs to the universal ribosomal protein uL23 family. In terms of assembly, part of the 50S ribosomal subunit. Contacts protein L29, and trigger factor when it is bound to the ribosome.

One of the early assembly proteins it binds 23S rRNA. One of the proteins that surrounds the polypeptide exit tunnel on the outside of the ribosome. Forms the main docking site for trigger factor binding to the ribosome. In Synechocystis sp. (strain ATCC 27184 / PCC 6803 / Kazusa), this protein is Large ribosomal subunit protein uL23.